A 309-amino-acid chain; its full sequence is Porphobilinogen deaminase (309 aa).

S-(dipyrrolylmethanemethyl)cysteine is present on Cys-241.

It belongs to the HMBS family. As to quaternary structure, monomer. The cofactor is dipyrromethane.

It catalyses the reaction 4 porphobilinogen + H2O = hydroxymethylbilane + 4 NH4(+). It functions in the pathway porphyrin-containing compound metabolism; protoporphyrin-IX biosynthesis; coproporphyrinogen-III from 5-aminolevulinate: step 2/4. In terms of biological role, tetrapolymerization of the monopyrrole PBG into the hydroxymethylbilane pre-uroporphyrinogen in several discrete steps. In Bacillus cereus (strain AH820), this protein is Porphobilinogen deaminase.